A 411-amino-acid polypeptide reads, in one-letter code: Phosphoglycerate kinase (411 aa).

Substrate contacts are provided by residues Asp-22–Asn-24, Arg-37, His-60–Arg-63, Arg-123, and Arg-165. ATP-binding positions include Lys-216, Glu-339, and Gly-366–Ser-369.

It belongs to the phosphoglycerate kinase family. In terms of assembly, monomer.

It localises to the cytoplasm. The catalysed reaction is (2R)-3-phosphoglycerate + ATP = (2R)-3-phospho-glyceroyl phosphate + ADP. It participates in carbohydrate degradation; glycolysis; pyruvate from D-glyceraldehyde 3-phosphate: step 2/5. In Mycoplasma genitalium (strain ATCC 33530 / DSM 19775 / NCTC 10195 / G37) (Mycoplasmoides genitalium), this protein is Phosphoglycerate kinase (pgk).